The primary structure comprises 346 residues: Nitrilase 3 (346 aa).

At Ser2 the chain carries N-acetylserine. The region spanning 25–297 (VRVTIVQSST…EGLVTADLDL (273 aa)) is the CN hydrolase domain. Glu65 serves as the catalytic Proton acceptor. Lys152 acts as the Proton donor in catalysis. Catalysis depends on Cys186, which acts as the Nucleophile.

The protein belongs to the carbon-nitrogen hydrolase superfamily. Nitrilase family.

The protein resides in the cell membrane. The enzyme catalyses a nitrile + 2 H2O = a carboxylate + NH4(+). Can convert indole-3-acetonitrile to the plant hormone indole-3-acetic acid. In Arabidopsis thaliana (Mouse-ear cress), this protein is Nitrilase 3 (NIT3).